Reading from the N-terminus, the 376-residue chain is MARGPGPLGRPRPDTVAMPKRGKRLKFRAHDACSGRVTVADYADSDLAVVRSGRVKKAVANAVRQEVKSLCGLEASQVPAEEALSGAGEPYDIIDSSDEMDAQEENIHERTVSRKKKSKRHKEELDGAGGEEYPMDIWLLLASYIRPEDIVNFSLICKNAWTVTCTAAFWTRLYRRHYTLDASLPLRLRPESMEKLHCLRACVIRSLYHMYEPFAARISKNPAIPESTPSTLKNSKCLLFWCRKIVGNRQEPMWEFNFKFKKQSPRLKSKCTGGLQPPVQYEDVHTNPDQDCCLLQVTTLNFIFIPIVMGMIFTLFTINVSTDMRHHRVRLVFQDSPVHGGRKLRSEQGVQVILDPVHSVRLFDWWHPQYPFSLRA.

Disordered stretches follow at residues 1–20 and 102–127; these read MARG…AMPK and AQEE…ELDG. A helical membrane pass occupies residues 300-320; that stretch reads LNFIFIPIVMGMIFTLFTINV.

The protein belongs to the TMEM183 family. As to expression, expressed in brain, lung, pancreas, thymus, intestine and blood. Not detected in heart, placenta, liver, muscle, kidney, spleen, prostate, testis, ovary and colon.

The protein localises to the membrane. The polypeptide is Putative transmembrane protein 183BP (Homo sapiens (Human)).